Consider the following 457-residue polypeptide: uncharacterized protein (457 aa).

The next 12 membrane-spanning stretches (helical) occupy residues 18-38 (VMTV…PYLV), 44-64 (GAYV…MILV), 101-121 (MGLL…GWVI), 158-178 (IIFY…KGII), 188-208 (LMPL…TLPG), 228-248 (LFIF…GVLI), 273-293 (IIAV…GIEP), 294-314 (NAGP…LWAG), 316-336 (FFAI…SITI), 355-375 (AIVL…ILGD), 396-416 (SGNI…GFVL), and 433-453 (IKIW…VIFI).

This sequence belongs to the sodium:neurotransmitter symporter (SNF) (TC 2.A.22) family.

The protein resides in the cell membrane. Putative sodium-dependent transporter. This is an uncharacterized protein from Haemophilus influenzae (strain ATCC 51907 / DSM 11121 / KW20 / Rd).